The following is a 280-amino-acid chain: Lysosome-associated membrane glycoprotein 5 (280 aa).

The N-terminal stretch at methionine 1–alanine 29 is a signal peptide. Over glutamate 30–glutamate 235 the chain is Extracellular. Asparagine 35, asparagine 53, and asparagine 127 each carry an N-linked (GlcNAc...) asparagine glycan. Residues threonine 236–tyrosine 256 form a helical membrane-spanning segment. The Cytoplasmic segment spans residues histidine 257 to glycine 280.

It belongs to the LAMP family. Post-translationally, glycosylated. As to expression, expressed in plasmocytoid dendritic cells. Expressed in suprabasal skin keratinocytes and squamous cells (at protein level). Expressed in the brain and weakly in spleen and skin. Expressed in plasmocytoid dendritic cells.

The protein localises to the cell membrane. It is found in the cytoplasmic vesicle. The protein resides in the secretory vesicle. It localises to the synaptic vesicle membrane. Its subcellular location is the endoplasmic reticulum-Golgi intermediate compartment membrane. The protein localises to the endosome membrane. It is found in the cytoplasmic vesicle membrane. The protein resides in the cell projection. It localises to the dendrite. Its subcellular location is the growth cone membrane. The protein localises to the early endosome membrane. It is found in the recycling endosome. In terms of biological role, plays a role in short-term synaptic plasticity in a subset of GABAergic neurons in the brain. This is Lysosome-associated membrane glycoprotein 5 (LAMP5) from Homo sapiens (Human).